A 410-amino-acid polypeptide reads, in one-letter code: 26S proteasome non-ATPase regulatory subunit 6 (410 aa).

In terms of domain architecture, PCI spans 207-382; that stretch reads DFAGAADLFL…GVIEVNHRDS (176 aa).

It belongs to the proteasome subunit S10 family. In terms of tissue distribution, expressed in multiple tissues including the intestine, pharynx and hypodermis.

Its function is as follows. Acts as a regulatory subunit of the 26S proteasome which is involved in the ATP-dependent degradation of ubiquitinated proteins. In Caenorhabditis elegans, this protein is 26S proteasome non-ATPase regulatory subunit 6 (rpn-7).